Consider the following 199-residue polypeptide: ATP-dependent Clp protease proteolytic subunit (199 aa).

A disordered region spans residues 1-23 (MTTSAARKGLRTRGSACPRATRS). The active-site Nucleophile is Ser100. His125 is a catalytic residue.

This sequence belongs to the peptidase S14 family. Fourteen ClpP subunits assemble into 2 heptameric rings which stack back to back to give a disk-like structure with a central cavity, resembling the structure of eukaryotic proteasomes.

Its subcellular location is the cytoplasm. It carries out the reaction Hydrolysis of proteins to small peptides in the presence of ATP and magnesium. alpha-casein is the usual test substrate. In the absence of ATP, only oligopeptides shorter than five residues are hydrolyzed (such as succinyl-Leu-Tyr-|-NHMec, and Leu-Tyr-Leu-|-Tyr-Trp, in which cleavage of the -Tyr-|-Leu- and -Tyr-|-Trp bonds also occurs).. In terms of biological role, cleaves peptides in various proteins in a process that requires ATP hydrolysis. Has a chymotrypsin-like activity. Plays a major role in the degradation of misfolded proteins. This chain is ATP-dependent Clp protease proteolytic subunit, found in Paracoccus denitrificans.